The sequence spans 130 residues: Protein ApaG (130 aa).

Residues 3–127 form the ApaG domain; the sequence is KAETRGIMVT…FSLDSPHLRR (125 aa).

This Methylorubrum extorquens (strain CM4 / NCIMB 13688) (Methylobacterium extorquens) protein is Protein ApaG.